A 431-amino-acid polypeptide reads, in one-letter code: MKVLIIGSGGREHALAWKVAQDPRVEKVFVAPGNAGTAIEAKCENVAIDVCALEQLADFAEKNVDLTIVGPEAPLVIGVVDLFRSRGLDCFGPTKGAAQLEGSKAFTKDFLARHEIPTADYQNFTEIEPALAYLQEKGAPIVIKADGLAAGKGVIVAMTLEEAEAAVRDMLAGNAFGEAGSRVVIEEFLDGEEASFIVMVDGHNVLPMATSQDHKRVGDQDTGPNTGGMGAYSPAPVVTADVHQRVMDQVIWPTVRGMAEEGNVYTGFLYAGLMIDKAGNPKVIEFNCRFGDPETQPVMLRLESSLVLLVEAAFAKALDKVEAQWDPRPSLGVVLAAGGYPGDYAKGDVINGLDAAAKIEGKVFHAGTALKDGKVTTNGGRVLCATAMGSTVADAQQQAYRLAKEVSWNGSFYRSDIGYRAIARERGEHQQ.

One can recognise an ATP-grasp domain in the interval 108-315 (KDFLARHEIP…LVLLVEAAFA (208 aa)). Residue 134-195 (LQEKGAPIVI…EEFLDGEEAS (62 aa)) coordinates ATP. Mg(2+) is bound by residues Glu285 and Asn287.

The protein belongs to the GARS family. Requires Mg(2+) as cofactor. Mn(2+) serves as cofactor.

The enzyme catalyses 5-phospho-beta-D-ribosylamine + glycine + ATP = N(1)-(5-phospho-beta-D-ribosyl)glycinamide + ADP + phosphate + H(+). It participates in purine metabolism; IMP biosynthesis via de novo pathway; N(1)-(5-phospho-D-ribosyl)glycinamide from 5-phospho-alpha-D-ribose 1-diphosphate: step 2/2. The protein is Phosphoribosylamine--glycine ligase of Pseudomonas putida (strain ATCC 47054 / DSM 6125 / CFBP 8728 / NCIMB 11950 / KT2440).